Reading from the N-terminus, the 120-residue chain is Large ribosomal subunit protein uL18 (120 aa).

The segment at 1-26 is disordered; it reads MKLTRRESKQRRHRRVRGKVQGSPER. Residues 8 to 18 show a composition bias toward basic residues; that stretch reads SKQRRHRRVRG.

It belongs to the universal ribosomal protein uL18 family. As to quaternary structure, part of the 50S ribosomal subunit; part of the 5S rRNA/L5/L18/L25 subcomplex. Contacts the 5S and 23S rRNAs.

This is one of the proteins that bind and probably mediate the attachment of the 5S RNA into the large ribosomal subunit, where it forms part of the central protuberance. The polypeptide is Large ribosomal subunit protein uL18 (Trichormus variabilis (strain ATCC 29413 / PCC 7937) (Anabaena variabilis)).